The following is a 137-amino-acid chain: Thionin-like protein 1 (137 aa).

A signal peptide spans 1 to 23 (MEDKRVAMLVVMMLVMGNMLIEA).

This sequence belongs to the plant thionin (TC 1.C.44) family. In terms of processing, is disulfide-linked.

The protein resides in the secreted. Functionally, may be involved in plant defense. The sequence is that of Thionin-like protein 1 from Arabidopsis thaliana (Mouse-ear cress).